The chain runs to 394 residues: Protein TsgA homolog (394 aa).

Transmembrane regions (helical) follow at residues 11 to 31, 51 to 71, 76 to 96, 101 to 121, 135 to 155, 163 to 183, 205 to 225, 245 to 265, 273 to 293, 299 to 319, 333 to 353, and 362 to 382; these read WISF…GMVL, FLNA…EIVP, LIFG…SHSL, LCMF…TFLI, LFTD…AAAI, YWVY…ALCF, LGVA…LGFI, SVVG…SAIL, IVTA…NTTD, WIIM…ITLG, FILT…GPIV, and LATT…LGFV.

It belongs to the major facilitator superfamily. TsgA family.

It localises to the cell inner membrane. The chain is Protein TsgA homolog from Erwinia tasmaniensis (strain DSM 17950 / CFBP 7177 / CIP 109463 / NCPPB 4357 / Et1/99).